The sequence spans 124 residues: Holo-[acyl-carrier-protein] synthase (124 aa).

Mg(2+)-binding residues include D8 and E60.

This sequence belongs to the P-Pant transferase superfamily. AcpS family. Mg(2+) is required as a cofactor.

Its subcellular location is the cytoplasm. The catalysed reaction is apo-[ACP] + CoA = holo-[ACP] + adenosine 3',5'-bisphosphate + H(+). Its function is as follows. Transfers the 4'-phosphopantetheine moiety from coenzyme A to a Ser of acyl-carrier-protein. This is Holo-[acyl-carrier-protein] synthase from Wolbachia pipientis subsp. Culex pipiens (strain wPip).